A 288-amino-acid polypeptide reads, in one-letter code: Bifunctional protein FolD (288 aa).

Residues 166–168 (GRS), serine 191, and isoleucine 232 contribute to the NADP(+) site.

Belongs to the tetrahydrofolate dehydrogenase/cyclohydrolase family. Homodimer.

The enzyme catalyses (6R)-5,10-methylene-5,6,7,8-tetrahydrofolate + NADP(+) = (6R)-5,10-methenyltetrahydrofolate + NADPH. It catalyses the reaction (6R)-5,10-methenyltetrahydrofolate + H2O = (6R)-10-formyltetrahydrofolate + H(+). It functions in the pathway one-carbon metabolism; tetrahydrofolate interconversion. In terms of biological role, catalyzes the oxidation of 5,10-methylenetetrahydrofolate to 5,10-methenyltetrahydrofolate and then the hydrolysis of 5,10-methenyltetrahydrofolate to 10-formyltetrahydrofolate. This Rickettsia africae (strain ESF-5) protein is Bifunctional protein FolD.